The sequence spans 140 residues: Putative nickel-responsive regulator 3 (140 aa).

Ni(2+) is bound by residues His-81, His-92, His-94, and Cys-100.

Belongs to the transcriptional regulatory CopG/NikR family. Ni(2+) is required as a cofactor.

Transcriptional regulator. This is Putative nickel-responsive regulator 3 from Methanosarcina mazei (strain ATCC BAA-159 / DSM 3647 / Goe1 / Go1 / JCM 11833 / OCM 88) (Methanosarcina frisia).